The chain runs to 171 residues: uncharacterized protein (171 aa).

Disordered regions lie at residues 68-112 (NKNN…DQPY) and 152-171 (LPEK…SIKN). Residues 161 to 171 (DDEDDMFSIKN) are compositionally biased toward acidic residues.

The protein belongs to the asfivirus H171R family.

It is found in the virion. This is an uncharacterized protein from African swine fever virus (strain Badajoz 1971 Vero-adapted) (Ba71V).